The primary structure comprises 335 residues: Protein BRASSINAZOLE-RESISTANT 2 (335 aa).

Residues 1 to 19 (MTSDGATSTSAAAAAAAMA) show a composition bias toward low complexity. Disordered regions lie at residues 1–40 (MTSD…RRRR), 85–122 (TYRK…FDSP), and 164–190 (PPLR…KPLP). A required for DNA-binding region spans residues 22-103 (RKPSWREREN…PGDMAGSSSR (82 aa)). The span at 99-120 (GSSSRATPYSSHNQSPLSSTFD) shows a compositional bias: polar residues. Thr175 carries the phosphothreonine modification. Residues 231-251 (HAPATIPECDESDSSTVDSGH) are PEST-like.

This sequence belongs to the BZR/LAT61 family. As to quaternary structure, interacts with ASK7/BIN2 through its C-terminal domain and with the bHLH transcription factors BIM1, BIM2 and BIM3 through its C- and N-terminal domains. Interacts (via N-terminus) with REF6 and ELF6. Interacts with MYB30. Interacts with IWS1. Interacts with ASHH2/SDG8. Binds to MYB56 when dephosphorylated in the nucleus of quiescent center (QC) cells. Binds to WRKY46, WRKY54 and WRKY70 to cooperatively regulate the expression of target genes. Phosphorylated by ASK7/BIN2. Phosphorylation increases protein degradation and/or interferes with the nuclear localization. As to expression, ubiquitously expressed in cotyledons, leaves, hypocotyls and roots.

Its subcellular location is the nucleus. It is found in the cytoplasm. Its function is as follows. Positive regulator of brassinosteroid (BR) signaling. Transcription factor that activates target gene expression by binding specifically to the DNA sequence 5'-CANNTG-3'(E box) through its N-terminal domain. Can bind individually to the promoter as a homodimer or synergistically as a heterodimer with BIM1, BIM2 or BIM3. The C-terminal domain is probably involved in transcriptional activation. Recruits the transcription elongation factor IWS1 to control BR-regulated gene expression. Forms a trimeric complex with IWS1 and ASHH2/SDG8 to regulate BR-regulated gene expression. Promotes quiescent center (QC) self-renewal by cell divisions in the primary root. Binds to the E-boxes of the BRAVO promoter to repress its expression. This chain is Protein BRASSINAZOLE-RESISTANT 2, found in Arabidopsis thaliana (Mouse-ear cress).